The chain runs to 293 residues: Acetyl-coenzyme A carboxylase carboxyl transferase subunit beta (293 aa).

The CoA carboxyltransferase N-terminal domain occupies 29–293; the sequence is LWVKCSECSQ…GVKELAEANI (265 aa). Zn(2+) contacts are provided by C33, C36, C52, and C55. Residues 33–55 form a C4-type zinc finger; it reads CSECSQVAYRKDLISNFNVCSNC.

The protein belongs to the AccD/PCCB family. Acetyl-CoA carboxylase is a heterohexamer composed of biotin carboxyl carrier protein (AccB), biotin carboxylase (AccC) and two subunits each of ACCase subunit alpha (AccA) and ACCase subunit beta (AccD). Zn(2+) serves as cofactor.

Its subcellular location is the cytoplasm. The catalysed reaction is N(6)-carboxybiotinyl-L-lysyl-[protein] + acetyl-CoA = N(6)-biotinyl-L-lysyl-[protein] + malonyl-CoA. It functions in the pathway lipid metabolism; malonyl-CoA biosynthesis; malonyl-CoA from acetyl-CoA: step 1/1. Its function is as follows. Component of the acetyl coenzyme A carboxylase (ACC) complex. Biotin carboxylase (BC) catalyzes the carboxylation of biotin on its carrier protein (BCCP) and then the CO(2) group is transferred by the transcarboxylase to acetyl-CoA to form malonyl-CoA. The sequence is that of Acetyl-coenzyme A carboxylase carboxyl transferase subunit beta from Prochlorococcus marinus (strain MIT 9312).